Consider the following 614-residue polypeptide: Putative ankyrin repeat protein RBE_0997 (614 aa).

ANK repeat units lie at residues 3–32 (KDEELLIEAIENDDLKEVQKLLQEGVDPNI), 36–65 (DDKPCILSAIRNKNLDIVSVLLENGANPNA), 69–98 (DGEPIISAAIRTKRLDIINILLENRADPNL), 102–131 (RKNTILLKAIQSNNLDIVNAFLNKGANLNA), 135–164 (SGYPIFLKAIKSENLEIINALLEKGANPNL), 168–197 (DGSPLLFTAINTKNLDIIDALIKMGANVEA), 201–231 (DGNTVLNVLLERRGNVNIISLLIENSQDKEK), 239–268 (NGETFLHLAAQQGNSKIFDKYLDYYPTVNI), and 272–301 (AGYTPLYWSKLLGHTEISNKLIERAEELKE). In terms of domain architecture, Glutamine amidotransferase type-1 spans 348 to 580 (NVEDIDYRKI…VQSAETFMNK (233 aa)). The active-site Nucleophile is cysteine 444. Residues histidine 547 and glutamate 549 contribute to the active site.

The protein is Putative ankyrin repeat protein RBE_0997 of Rickettsia bellii (strain RML369-C).